Reading from the N-terminus, the 331-residue chain is Ribosomal RNA small subunit methyltransferase H (331 aa).

Residues 38–40 (GGY), aspartate 56, phenylalanine 83, aspartate 100, and glutamine 107 each bind S-adenosyl-L-methionine. Residues 308–331 (TDAPAGPVDPQVLGMPLIPKKGRR) are disordered.

The protein belongs to the methyltransferase superfamily. RsmH family.

It is found in the cytoplasm. It catalyses the reaction cytidine(1402) in 16S rRNA + S-adenosyl-L-methionine = N(4)-methylcytidine(1402) in 16S rRNA + S-adenosyl-L-homocysteine + H(+). Functionally, specifically methylates the N4 position of cytidine in position 1402 (C1402) of 16S rRNA. The chain is Ribosomal RNA small subunit methyltransferase H from Cereibacter sphaeroides (strain ATCC 17025 / ATH 2.4.3) (Rhodobacter sphaeroides).